A 246-amino-acid polypeptide reads, in one-letter code: UDP-2,3-diacylglucosamine hydrolase (246 aa).

The Mn(2+) site is built by Asp-8, His-10, Asp-41, Asn-79, and His-114. 79-80 contributes to the substrate binding site; sequence NR. Positions 122, 164, 167, and 195 each coordinate substrate. 2 residues coordinate Mn(2+): His-195 and His-197.

Belongs to the LpxH family. The cofactor is Mn(2+).

The protein resides in the cell inner membrane. It carries out the reaction UDP-2-N,3-O-bis[(3R)-3-hydroxytetradecanoyl]-alpha-D-glucosamine + H2O = 2-N,3-O-bis[(3R)-3-hydroxytetradecanoyl]-alpha-D-glucosaminyl 1-phosphate + UMP + 2 H(+). The protein operates within glycolipid biosynthesis; lipid IV(A) biosynthesis; lipid IV(A) from (3R)-3-hydroxytetradecanoyl-[acyl-carrier-protein] and UDP-N-acetyl-alpha-D-glucosamine: step 4/6. Hydrolyzes the pyrophosphate bond of UDP-2,3-diacylglucosamine to yield 2,3-diacylglucosamine 1-phosphate (lipid X) and UMP by catalyzing the attack of water at the alpha-P atom. Involved in the biosynthesis of lipid A, a phosphorylated glycolipid that anchors the lipopolysaccharide to the outer membrane of the cell. The polypeptide is UDP-2,3-diacylglucosamine hydrolase (Vibrio cholerae serotype O1 (strain ATCC 39541 / Classical Ogawa 395 / O395)).